Consider the following 259-residue polypeptide: uncharacterized protein (259 aa).

The next 3 membrane-spanning stretches (helical) occupy residues 55-75, 85-105, and 127-147; these read ILIL…SYLI, FPSI…FFSS, and FFFA…LCCG.

It localises to the membrane. This is an uncharacterized protein from Arabidopsis thaliana (Mouse-ear cress).